A 200-amino-acid polypeptide reads, in one-letter code: Inner membrane-spanning protein YciB (200 aa).

6 helical membrane passes run 7–27 (HPLF…VVNA), 32–52 (FAAT…SYVV), 56–76 (VPLM…LTLV), 93–113 (LFAA…AIMF), 126–146 (ILTF…EIIW), and 153–173 (FWVG…AIAQ).

Belongs to the YciB family.

It localises to the cell inner membrane. Its function is as follows. Plays a role in cell envelope biogenesis, maintenance of cell envelope integrity and membrane homeostasis. The sequence is that of Inner membrane-spanning protein YciB from Bradyrhizobium sp. (strain BTAi1 / ATCC BAA-1182).